Reading from the N-terminus, the 865-residue chain is Alanine--tRNA ligase (865 aa).

Histidine 554, histidine 558, cysteine 656, and histidine 660 together coordinate Zn(2+).

This sequence belongs to the class-II aminoacyl-tRNA synthetase family. It depends on Zn(2+) as a cofactor.

Its subcellular location is the cytoplasm. The catalysed reaction is tRNA(Ala) + L-alanine + ATP = L-alanyl-tRNA(Ala) + AMP + diphosphate. In terms of biological role, catalyzes the attachment of alanine to tRNA(Ala) in a two-step reaction: alanine is first activated by ATP to form Ala-AMP and then transferred to the acceptor end of tRNA(Ala). Also edits incorrectly charged Ser-tRNA(Ala) and Gly-tRNA(Ala) via its editing domain. The chain is Alanine--tRNA ligase from Francisella tularensis subsp. holarctica (strain LVS).